A 251-amino-acid polypeptide reads, in one-letter code: Imidazole glycerol phosphate synthase subunit HisF (251 aa).

Residues Asp12 and Asp131 contribute to the active site.

It belongs to the HisA/HisF family. Heterodimer of HisH and HisF.

It is found in the cytoplasm. The catalysed reaction is 5-[(5-phospho-1-deoxy-D-ribulos-1-ylimino)methylamino]-1-(5-phospho-beta-D-ribosyl)imidazole-4-carboxamide + L-glutamine = D-erythro-1-(imidazol-4-yl)glycerol 3-phosphate + 5-amino-1-(5-phospho-beta-D-ribosyl)imidazole-4-carboxamide + L-glutamate + H(+). It functions in the pathway amino-acid biosynthesis; L-histidine biosynthesis; L-histidine from 5-phospho-alpha-D-ribose 1-diphosphate: step 5/9. Functionally, IGPS catalyzes the conversion of PRFAR and glutamine to IGP, AICAR and glutamate. The HisF subunit catalyzes the cyclization activity that produces IGP and AICAR from PRFAR using the ammonia provided by the HisH subunit. This Streptomyces griseus subsp. griseus (strain JCM 4626 / CBS 651.72 / NBRC 13350 / KCC S-0626 / ISP 5235) protein is Imidazole glycerol phosphate synthase subunit HisF.